The primary structure comprises 313 residues: Aspartate carbamoyltransferase catalytic subunit (313 aa).

The carbamoyl phosphate site is built by R59 and T60. K87 lines the L-aspartate pocket. Residues R109, H137, and Q140 each coordinate carbamoyl phosphate. R170 and R224 together coordinate L-aspartate. Carbamoyl phosphate contacts are provided by G265 and P266.

It belongs to the aspartate/ornithine carbamoyltransferase superfamily. ATCase family. In terms of assembly, heterododecamer (2C3:3R2) of six catalytic PyrB chains organized as two trimers (C3), and six regulatory PyrI chains organized as three dimers (R2).

It catalyses the reaction carbamoyl phosphate + L-aspartate = N-carbamoyl-L-aspartate + phosphate + H(+). It functions in the pathway pyrimidine metabolism; UMP biosynthesis via de novo pathway; (S)-dihydroorotate from bicarbonate: step 2/3. Catalyzes the condensation of carbamoyl phosphate and aspartate to form carbamoyl aspartate and inorganic phosphate, the committed step in the de novo pyrimidine nucleotide biosynthesis pathway. The chain is Aspartate carbamoyltransferase catalytic subunit from Sinorhizobium medicae (strain WSM419) (Ensifer medicae).